Here is a 684-residue protein sequence, read N- to C-terminus: Glycine--tRNA ligase beta subunit (684 aa).

Belongs to the class-II aminoacyl-tRNA synthetase family. In terms of assembly, tetramer of two alpha and two beta subunits.

Its subcellular location is the cytoplasm. The catalysed reaction is tRNA(Gly) + glycine + ATP = glycyl-tRNA(Gly) + AMP + diphosphate. The chain is Glycine--tRNA ligase beta subunit from Pseudomonas aeruginosa (strain LESB58).